We begin with the raw amino-acid sequence, 549 residues long: Dihydroxy-acid dehydratase (549 aa).

Asp-78 lines the Mg(2+) pocket. [2Fe-2S] cluster is bound at residue Cys-119. 2 residues coordinate Mg(2+): Asp-120 and Lys-121. Lys-121 is subject to N6-carboxylysine. Cys-191 is a [2Fe-2S] cluster binding site. A Mg(2+)-binding site is contributed by Glu-441. The active-site Proton acceptor is Ser-466.

This sequence belongs to the IlvD/Edd family. As to quaternary structure, homodimer. [2Fe-2S] cluster serves as cofactor. The cofactor is Mg(2+).

It catalyses the reaction (2R)-2,3-dihydroxy-3-methylbutanoate = 3-methyl-2-oxobutanoate + H2O. It carries out the reaction (2R,3R)-2,3-dihydroxy-3-methylpentanoate = (S)-3-methyl-2-oxopentanoate + H2O. Its pathway is amino-acid biosynthesis; L-isoleucine biosynthesis; L-isoleucine from 2-oxobutanoate: step 3/4. It functions in the pathway amino-acid biosynthesis; L-valine biosynthesis; L-valine from pyruvate: step 3/4. In terms of biological role, functions in the biosynthesis of branched-chain amino acids. Catalyzes the dehydration of (2R,3R)-2,3-dihydroxy-3-methylpentanoate (2,3-dihydroxy-3-methylvalerate) into 2-oxo-3-methylpentanoate (2-oxo-3-methylvalerate) and of (2R)-2,3-dihydroxy-3-methylbutanoate (2,3-dihydroxyisovalerate) into 2-oxo-3-methylbutanoate (2-oxoisovalerate), the penultimate precursor to L-isoleucine and L-valine, respectively. This chain is Dihydroxy-acid dehydratase, found in Methanothermobacter thermautotrophicus (strain ATCC 29096 / DSM 1053 / JCM 10044 / NBRC 100330 / Delta H) (Methanobacterium thermoautotrophicum).